The sequence spans 468 residues: ATP synthase subunit beta (468 aa).

An ATP-binding site is contributed by 155-162 (GGAGVGKT).

Belongs to the ATPase alpha/beta chains family. In terms of assembly, F-type ATPases have 2 components, CF(1) - the catalytic core - and CF(0) - the membrane proton channel. CF(1) has five subunits: alpha(3), beta(3), gamma(1), delta(1), epsilon(1). CF(0) has three main subunits: a(1), b(2) and c(9-12). The alpha and beta chains form an alternating ring which encloses part of the gamma chain. CF(1) is attached to CF(0) by a central stalk formed by the gamma and epsilon chains, while a peripheral stalk is formed by the delta and b chains.

It is found in the cell membrane. The enzyme catalyses ATP + H2O + 4 H(+)(in) = ADP + phosphate + 5 H(+)(out). Its function is as follows. Produces ATP from ADP in the presence of a proton gradient across the membrane. The catalytic sites are hosted primarily by the beta subunits. This Streptococcus suis (strain 98HAH33) protein is ATP synthase subunit beta.